The following is a 631-amino-acid chain: Glutamine--fructose-6-phosphate aminotransferase [isomerizing] (631 aa).

Cysteine 2 (nucleophile; for GATase activity) is an active-site residue. The Glutamine amidotransferase type-2 domain maps to 2–225 (CGIVGYIGTQ…NGEIARLTPL (224 aa)). 2 consecutive SIS domains span residues 298–446 (LDPQ…QRHS) and 480–621 (LAHE…VDQP). Lysine 626 acts as the For Fru-6P isomerization activity in catalysis.

In terms of assembly, homodimer.

It localises to the cytoplasm. It carries out the reaction D-fructose 6-phosphate + L-glutamine = D-glucosamine 6-phosphate + L-glutamate. Its function is as follows. Catalyzes the first step in hexosamine metabolism, converting fructose-6P into glucosamine-6P using glutamine as a nitrogen source. The polypeptide is Glutamine--fructose-6-phosphate aminotransferase [isomerizing] (Synechocystis sp. (strain ATCC 27184 / PCC 6803 / Kazusa)).